Here is a 237-residue protein sequence, read N- to C-terminus: Germination-specific N-acetylmuramoyl-L-alanine amidase (237 aa).

The N-terminal stretch at 1-27 is a signal peptide; it reads MRKKLKWLSFLLGFIILLFLFKYQFSN. Residues 43–226 form the MurNAc-LAA domain; that stretch reads IYLDPGHGGP…VASSIYKGIL (184 aa).

The protein belongs to the N-acetylmuramoyl-L-alanine amidase 3 family.

The protein localises to the secreted. It carries out the reaction Hydrolyzes the link between N-acetylmuramoyl residues and L-amino acid residues in certain cell-wall glycopeptides.. In terms of biological role, cleaves the peptide side chain from the N-acetylmuramic acid residues in peptidoglycan. This is a step in the formation of muramic delta-lactam residues in spore cortex. This chain is Germination-specific N-acetylmuramoyl-L-alanine amidase (cwlD), found in Bacillus subtilis (strain 168).